The following is a 514-amino-acid chain: Probable peptidoglycan glycosyltransferase FtsW (514 aa).

9 helical membrane-spanning segments follow: residues 45-65 (IGLIIVALALMTIGIIIVTSA), 86-106 (IYIVGAIIAAMVVLELPMQFW), 108-128 (TANPYLLLAAIGLLVAVLLVG), 137-157 (WLALGPITIQAAEPAKLFFFT), 182-202 (VVFFALAMLLLLQPDLGTVVV), 218-238 (LWQFFALVFAGVLAVVALIVF), 301-321 (ILAEELGFVGVLAVLGLILWM), 347-367 (VGIWFSFQTAVNIGASAGILP), and 373-393 (LPLVSYGGSSLIVMSVAVALL). Disordered regions lie at residues 411–437 (GDNKRTSKAKAKPSAKSAAKPAVRTKH) and 449–501 (DYNQ…AGIK).

This sequence belongs to the SEDS family. FtsW subfamily.

The protein localises to the cell inner membrane. The enzyme catalyses [GlcNAc-(1-&gt;4)-Mur2Ac(oyl-L-Ala-gamma-D-Glu-L-Lys-D-Ala-D-Ala)](n)-di-trans,octa-cis-undecaprenyl diphosphate + beta-D-GlcNAc-(1-&gt;4)-Mur2Ac(oyl-L-Ala-gamma-D-Glu-L-Lys-D-Ala-D-Ala)-di-trans,octa-cis-undecaprenyl diphosphate = [GlcNAc-(1-&gt;4)-Mur2Ac(oyl-L-Ala-gamma-D-Glu-L-Lys-D-Ala-D-Ala)](n+1)-di-trans,octa-cis-undecaprenyl diphosphate + di-trans,octa-cis-undecaprenyl diphosphate + H(+). It participates in cell wall biogenesis; peptidoglycan biosynthesis. In terms of biological role, peptidoglycan polymerase that is essential for cell division. The protein is Probable peptidoglycan glycosyltransferase FtsW of Alteromonas naphthalenivorans.